We begin with the raw amino-acid sequence, 431 residues long: Histidinol dehydrogenase (431 aa).

The NAD(+) site is built by Y130, Q192, and N215. Substrate-binding residues include S238, Q260, and H263. Q260 and H263 together coordinate Zn(2+). Catalysis depends on proton acceptor residues E328 and H329. Substrate-binding residues include H329, D362, E416, and H421. D362 provides a ligand contact to Zn(2+). Zn(2+) is bound at residue H421.

It belongs to the histidinol dehydrogenase family. Zn(2+) is required as a cofactor.

The catalysed reaction is L-histidinol + 2 NAD(+) + H2O = L-histidine + 2 NADH + 3 H(+). The protein operates within amino-acid biosynthesis; L-histidine biosynthesis; L-histidine from 5-phospho-alpha-D-ribose 1-diphosphate: step 9/9. In terms of biological role, catalyzes the sequential NAD-dependent oxidations of L-histidinol to L-histidinaldehyde and then to L-histidine. The sequence is that of Histidinol dehydrogenase from Thermosynechococcus vestitus (strain NIES-2133 / IAM M-273 / BP-1).